A 623-amino-acid polypeptide reads, in one-letter code: Protein vein (623 aa).

Positions 1 to 40 (MYAQHLRKWSLKTKKQLMPLILLIISYMLLLNTCVLSSSA) are cleaved as a signal peptide. Disordered regions lie at residues 70-98 (IPLS…SSNN), 130-162 (DAGS…SMQK), 184-214 (AASS…NYSS), and 229-317 (PESM…QRYN). Low complexity-rich tracts occupy residues 72 to 98 (LSSD…SSNN) and 136 to 158 (PAQQ…QQQQ). The N-linked (GlcNAc...) asparagine glycan is linked to Asn-76. Asn-211 carries N-linked (GlcNAc...) asparagine glycosylation. Residues 233-248 (LEDRSPEQAARSRRDG) show a composition bias toward basic and acidic residues. The N-linked (GlcNAc...) asparagine glycan is linked to Asn-252. A compositionally biased stretch (low complexity) spans 255-267 (RQQQRTGHRQQLQ). Basic residues predominate over residues 305-316 (QRRKHQRKHQRY). Residues Asn-350, Asn-381, Asn-424, Asn-449, Asn-521, and Asn-574 are each glycosylated (N-linked (GlcNAc...) asparagine). Residues 457–542 (TKIFSKPSKA…AKNKASKAIA (86 aa)) enclose the Ig-like C2-type domain. Disulfide bonds link Cys-478–Cys-531, Cys-566–Cys-577, Cys-571–Cys-588, and Cys-590–Cys-599. In terms of domain architecture, EGF-like spans 561 to 599 (ASGIPCNFDYCFHNGTCRMIPDINEVYCRCPTEYFGNRC).

It localises to the secreted. Functionally, ligand for the EGF receptor. Seems to play a role in the global proliferation of wing disc cells and the larval patterning. Shows a strong synergistic genetic interaction with spi, suggesting a molecular interdependence. Required for the development of interveins cells. This is Protein vein (vn) from Drosophila melanogaster (Fruit fly).